Consider the following 588-residue polypeptide: ATP-dependent lipid A-core flippase (588 aa).

The next 6 helical transmembrane spans lie at 23–43 (FWPV…IDAG), 56–76 (FITI…IGIT), 141–161 (DALT…TVMM), 162–182 (VICW…GIIV), 257–277 (LVIA…STVI), and 278–298 (TISA…IKPM). Positions 28–310 (LLGVLANILY…LTTLNATIQR (283 aa)) constitute an ABC transmembrane type-1 domain. Residues 342–576 (IEFKHVYHAY…DGHYAQLYKV (235 aa)) enclose the ABC transporter domain. 375–382 (GHSGSGKT) is an ATP binding site.

The protein belongs to the ABC transporter superfamily. Lipid exporter (TC 3.A.1.106) family. In terms of assembly, homodimer.

The protein localises to the cell inner membrane. The catalysed reaction is ATP + H2O + lipid A-core oligosaccharideSide 1 = ADP + phosphate + lipid A-core oligosaccharideSide 2.. Its function is as follows. Involved in lipopolysaccharide (LPS) biosynthesis. Translocates lipid A-core from the inner to the outer leaflet of the inner membrane. Transmembrane domains (TMD) form a pore in the inner membrane and the ATP-binding domain (NBD) is responsible for energy generation. In Legionella pneumophila (strain Paris), this protein is ATP-dependent lipid A-core flippase.